We begin with the raw amino-acid sequence, 873 residues long: Alanine--tRNA ligase (873 aa).

Zn(2+)-binding residues include histidine 559, histidine 563, cysteine 661, and histidine 665.

Belongs to the class-II aminoacyl-tRNA synthetase family. Requires Zn(2+) as cofactor.

It is found in the cytoplasm. The catalysed reaction is tRNA(Ala) + L-alanine + ATP = L-alanyl-tRNA(Ala) + AMP + diphosphate. Catalyzes the attachment of alanine to tRNA(Ala) in a two-step reaction: alanine is first activated by ATP to form Ala-AMP and then transferred to the acceptor end of tRNA(Ala). Also edits incorrectly charged Ser-tRNA(Ala) and Gly-tRNA(Ala) via its editing domain. In Acaryochloris marina (strain MBIC 11017), this protein is Alanine--tRNA ligase.